Consider the following 459-residue polypeptide: ATP-dependent protease ATPase subunit HslU (459 aa).

ATP-binding positions include V21, 63 to 68 (GVGKTE), D273, E338, and R410.

Belongs to the ClpX chaperone family. HslU subfamily. A double ring-shaped homohexamer of HslV is capped on each side by a ring-shaped HslU homohexamer. The assembly of the HslU/HslV complex is dependent on binding of ATP.

It is found in the cytoplasm. Its function is as follows. ATPase subunit of a proteasome-like degradation complex; this subunit has chaperone activity. The binding of ATP and its subsequent hydrolysis by HslU are essential for unfolding of protein substrates subsequently hydrolyzed by HslV. HslU recognizes the N-terminal part of its protein substrates and unfolds these before they are guided to HslV for hydrolysis. The protein is ATP-dependent protease ATPase subunit HslU of Thermosipho africanus (strain TCF52B).